The following is a 127-amino-acid chain: Holo-[acyl-carrier-protein] synthase (127 aa).

The Mg(2+) site is built by Asp-8 and Glu-59.

Belongs to the P-Pant transferase superfamily. AcpS family. Requires Mg(2+) as cofactor.

Its subcellular location is the cytoplasm. The catalysed reaction is apo-[ACP] + CoA = holo-[ACP] + adenosine 3',5'-bisphosphate + H(+). Functionally, transfers the 4'-phosphopantetheine moiety from coenzyme A to a Ser of acyl-carrier-protein. This chain is Holo-[acyl-carrier-protein] synthase, found in Rickettsia bellii (strain OSU 85-389).